Here is a 1209-residue protein sequence, read N- to C-terminus: Phospholipid-transporting ATPase ID (1209 aa).

At 1–68 (MTVPKEIPEK…NIVTFLPVNL (68 aa)) the chain is on the cytoplasmic side. The disordered stretch occupies residues 12–36 (ARAGAPPSWSQKKPSWGTEEERRAR). Residues 69–89 (FEQFQEVANTYFLFLLILQLI) traverse the membrane as a helical segment. The Exoplasmic loop portion of the chain corresponds to 90-91 (PQ). The helical transmembrane segment at 92-112 (ISSLSWFTTIVPLVLVLTITA) threads the bilayer. The Cytoplasmic segment spans residues 113–295 (VKDATDDYFR…TSIDRLMNTL (183 aa)). The chain crosses the membrane as a helical span at residues 296-316 (VLWIFGFLVCMGVILAIGNAI). At 317–338 (WEHEVGTRFQVYLPWDEAVDSA) the chain is on the exoplasmic loop side. A helical membrane pass occupies residues 339–359 (FFSGFLSFWSYIIILNTVVPI). The Cytoplasmic portion of the chain corresponds to 360–898 (SLYVSVEVIR…KFLCYFFYKN (539 aa)). The active-site 4-aspartylphosphate intermediate is the Asp-411. ATP-binding residues include Asp-411, Lys-412, Thr-413, Glu-515, Phe-556, Lys-579, Arg-613, Thr-693, Gly-694, Asp-695, Arg-807, and Lys-813. Residue Asp-411 participates in Mg(2+) binding. Thr-413 lines the Mg(2+) pocket. Asp-833 provides a ligand contact to Mg(2+). Asn-836 and Asp-837 together coordinate ATP. Position 837 (Asp-837) interacts with Mg(2+). The helical transmembrane segment at 899-919 (FAFTMVHFWFGFFCGFSAQTV) threads the bilayer. Over 920–922 (YDQ) the chain is Exoplasmic loop. Residues 923 to 943 (YFITLYNIVYTSLPVLAMGVF) form a helical membrane-spanning segment. At 944–972 (DQDVPEQRSMEYPKLYEPGQLNLLFNKRE) the chain is on the cytoplasmic side. Residues 973–993 (FFICIAQGIYTSVLMFFIPYG) form a helical membrane-spanning segment. The Exoplasmic loop portion of the chain corresponds to 994 to 1011 (VFAEATRDDGTQLADYQS). The helical transmembrane segment at 1012 to 1032 (FAVTVATSLVIVVSVQIGLDT) threads the bilayer. Residues 1033-1036 (GYWT) are Cytoplasmic-facing. Residues 1037–1057 (AINHFFIWGSLAVYFAILFAM) form a helical membrane-spanning segment. The Exoplasmic loop segment spans residues 1058-1082 (HSNGLFDMFPNQFRFVGNAQNTLAQ). The chain crosses the membrane as a helical span at residues 1083-1103 (PTVWLTIALTTAVCIMPVVAF). At 1104-1209 (RFLRLSLKPD…SGGAEKPLKG (106 aa)) the chain is on the cytoplasmic side. Position 1175 is a phosphoserine (Ser-1175). The interval 1179–1209 (RSSSSWIESLRRKKSDSANSPSGGAEKPLKG) is disordered.

It belongs to the cation transport ATPase (P-type) (TC 3.A.3) family. Type IV subfamily. Component of a P4-ATPase flippase complex which consists of a catalytic alpha subunit ATP8B2 and an accessory beta subunit TMEM30A or TMEM30B. Requires Mg(2+) as cofactor. Expressed in brain and testes (at protein level).

The protein resides in the cell membrane. Its subcellular location is the endoplasmic reticulum membrane. It catalyses the reaction ATP + H2O + phospholipidSide 1 = ADP + phosphate + phospholipidSide 2.. The catalysed reaction is a 1,2-diacyl-sn-glycero-3-phosphocholine(out) + ATP + H2O = a 1,2-diacyl-sn-glycero-3-phosphocholine(in) + ADP + phosphate + H(+). Its function is as follows. Catalytic component of P4-ATPase flippase complex, which catalyzes the hydrolysis of ATP coupled to the transport of phosphatidylcholine (PC) from the outer to the inner leaflet of the plasma membrane. May contribute to the maintenance of membrane lipid asymmetry. This chain is Phospholipid-transporting ATPase ID, found in Mus musculus (Mouse).